The sequence spans 271 residues: Probable L,D-transpeptidase 3 (271 aa).

One can recognise a L,D-TPase catalytic domain in the interval V127–Q270. The active-site Proton donor/acceptor is H228. C246 functions as the Nucleophile in the catalytic mechanism.

Its pathway is cell wall biogenesis; peptidoglycan biosynthesis. Its activity is regulated as follows. Is irreversibly inactivated by the beta-lactam carbapenems via the formation of a covalent adduct resulting from acylation of the catalytic Cys. Imipenem is the most efficient drug for in vitro LdtMt3/Rv1433 inactivation. Its function is as follows. Probable L,D-transpeptidase that may perform as-yet-unknown cross-linking reactions in M.tuberculosis. Is not able to generate 3-&gt;3 cross-links in peptidoglycan, using tetrapeptide stems as acyl donor substrates. May function in the anchoring of proteins to peptidoglycan. The polypeptide is Probable L,D-transpeptidase 3 (Mycobacterium tuberculosis (strain ATCC 25618 / H37Rv)).